The sequence spans 629 residues: FAST kinase domain-containing protein 4 (629 aa).

Positions 559 to 617 (IAFLRWEFPNFNSRSKDLLGRFVLARRHVLAAGFLVVDVPYYEWLDLKSEWQKTAYLKD) constitute an RAP domain.

The protein belongs to the FAST kinase family.

The protein localises to the mitochondrion matrix. Plays a role in processing of mitochondrial RNA precursors and in stabilization of a subset of mature mitochondrial RNA species, such as MT-CO1, MT-CO2, MT-CYB, MT-CO3, MT-ND3, MT-ND5 and MT-ATP8/6. May play a role in cell cycle progression. This chain is FAST kinase domain-containing protein 4 (Tbrg4), found in Rattus norvegicus (Rat).